The chain runs to 39 residues: Photosystem II reaction center protein J (39 aa).

Residues 9 to 29 (LWLVGLVGGFAVITIVSLFIY) form a helical membrane-spanning segment.

The protein belongs to the PsbJ family. PSII is composed of 1 copy each of membrane proteins PsbA, PsbB, PsbC, PsbD, PsbE, PsbF, PsbH, PsbI, PsbJ, PsbK, PsbL, PsbM, PsbT, PsbX, PsbY, PsbZ, Psb30/Ycf12, at least 3 peripheral proteins of the oxygen-evolving complex and a large number of cofactors. It forms dimeric complexes.

The protein resides in the plastid. Its subcellular location is the chloroplast thylakoid membrane. In terms of biological role, one of the components of the core complex of photosystem II (PSII). PSII is a light-driven water:plastoquinone oxidoreductase that uses light energy to abstract electrons from H(2)O, generating O(2) and a proton gradient subsequently used for ATP formation. It consists of a core antenna complex that captures photons, and an electron transfer chain that converts photonic excitation into a charge separation. The protein is Photosystem II reaction center protein J of Thalassiosira pseudonana (Marine diatom).